The following is a 362-amino-acid chain: Protein RecA (362 aa).

Residue 65-72 (GPESSGKT) coordinates ATP. The segment at 323-362 (RVANGMEPLNEKSTKETADDKASGKTGENKQETIEEASKE) is disordered. Residues 331–362 (LNEKSTKETADDKASGKTGENKQETIEEASKE) show a composition bias toward basic and acidic residues.

The protein belongs to the RecA family.

Its subcellular location is the cytoplasm. In terms of biological role, can catalyze the hydrolysis of ATP in the presence of single-stranded DNA, the ATP-dependent uptake of single-stranded DNA by duplex DNA, and the ATP-dependent hybridization of homologous single-stranded DNAs. It interacts with LexA causing its activation and leading to its autocatalytic cleavage. The protein is Protein RecA of Limosilactobacillus reuteri (strain DSM 20016) (Lactobacillus reuteri).